The chain runs to 398 residues: S-adenosylmethionine synthase (398 aa).

136–141 lines the ATP pocket; it reads GTGSSD.

Belongs to the AdoMet synthase 2 family. Mg(2+) is required as a cofactor.

It carries out the reaction L-methionine + ATP + H2O = S-adenosyl-L-methionine + phosphate + diphosphate. The protein operates within amino-acid biosynthesis; S-adenosyl-L-methionine biosynthesis; S-adenosyl-L-methionine from L-methionine: step 1/1. Functionally, catalyzes the formation of S-adenosylmethionine from methionine and ATP. The protein is S-adenosylmethionine synthase of Methanosarcina mazei (strain ATCC BAA-159 / DSM 3647 / Goe1 / Go1 / JCM 11833 / OCM 88) (Methanosarcina frisia).